The chain runs to 518 residues: Probable triacylglyceride transporter BCG_1471c (518 aa).

Helical transmembrane passes span 7 to 27 (VAISAGSLAVLLGALDTYVVV), 46 to 66 (RITWIVTMYLLGYIAAMPLLG), 76 to 96 (LMLQVSLAGFIIGSVVTALAG), 110 to 130 (IQGVASGALLPITLALGADLW), 144 to 164 (AAQELGSVLGPLYGIFIVWLL), 170 to 190 (VFWINVPLTAIAMVMIHFSLP), 201 to 221 (VDLVGGLLLALALGLAVIGLY), 230 to 250 (VLPDYGAPLLVGALVAAVAFF), 270 to 290 (PFLSALGASVAAGAALMVTLV), 308 to 328 (AGMLLWFLIALPIGAVTGGWI), 337 to 357 (VAFAGLLIAAYGYWLISHWPV), 379 to 401 (LVVAGLGLGLVIGPLSSATLRVV), 408 to 428 (IASAAVVVARMTGMLIGVAAL), and 475 to 495 (IFTITAIVCVFGAVLGLLISG).

The protein belongs to the major facilitator superfamily.

The protein resides in the cell inner membrane. Inhibited by CCCP and valinomycin. Functionally, in association with lipoprotein LprG probably transports triacylglycerides (TAG) across the inner cell membrane into the periplasm; TAG probably regulates lipid metabolism and growth regulation. Confers resistance to several drugs such as rifampicin, clofazimine and novobiocin; is also part of the oxidative stress response and is needed to maintain normal growth characteristics. Probably an efflux transporter, involved in maintaining correct cell wall permeability. Probably required with LprG for normal surface localization of lipoarabinomannan (LAM). Required for optimal growth on cholesterol. The sequence is that of Probable triacylglyceride transporter BCG_1471c from Mycobacterium bovis (strain BCG / Pasteur 1173P2).